A 257-amino-acid chain; its full sequence is Type III pantothenate kinase (257 aa).

An ATP-binding site is contributed by 5 to 12; the sequence is DIGNTNIK. Residue 107 to 110 coordinates substrate; it reads GSDR. The active-site Proton acceptor is the Asp-109. Thr-133 is an ATP binding site.

Belongs to the type III pantothenate kinase family. As to quaternary structure, homodimer. It depends on NH4(+) as a cofactor. Requires K(+) as cofactor.

It localises to the cytoplasm. It catalyses the reaction (R)-pantothenate + ATP = (R)-4'-phosphopantothenate + ADP + H(+). The protein operates within cofactor biosynthesis; coenzyme A biosynthesis; CoA from (R)-pantothenate: step 1/5. Catalyzes the phosphorylation of pantothenate (Pan), the first step in CoA biosynthesis. In Ehrlichia ruminantium (strain Welgevonden), this protein is Type III pantothenate kinase.